A 370-amino-acid chain; its full sequence is Holliday junction branch migration complex subunit RuvB 2 (370 aa).

The segment at 1-54 (MAIISSRAAGAEDPGQRQQKSSARRRESKLAFARAEGLLQPQAHPSEAQEESLR) is disordered. Residues 13 to 214 (DPGQRQQKSS…FGQVQRLRFY (202 aa)) are large ATPase domain (RuvB-L). ATP is bound by residues L53, R54, G95, K98, T99, T100, 161 to 163 (EDF), R204, Y214, and R251. T99 is a Mg(2+) binding site. Residues 215-285 (EPHELAEIVL…VAAAALELFQ (71 aa)) are small ATPAse domain (RuvB-S). Residues 288–370 (PMGLDWTDRK…TAQSPLPVWS (83 aa)) are head domain (RuvB-H). DNA-binding residues include R343 and R348.

The protein belongs to the RuvB family. As to quaternary structure, homohexamer. Forms an RuvA(8)-RuvB(12)-Holliday junction (HJ) complex. HJ DNA is sandwiched between 2 RuvA tetramers; dsDNA enters through RuvA and exits via RuvB. An RuvB hexamer assembles on each DNA strand where it exits the tetramer. Each RuvB hexamer is contacted by two RuvA subunits (via domain III) on 2 adjacent RuvB subunits; this complex drives branch migration. In the full resolvosome a probable DNA-RuvA(4)-RuvB(12)-RuvC(2) complex forms which resolves the HJ.

It is found in the cytoplasm. It catalyses the reaction ATP + H2O = ADP + phosphate + H(+). Its function is as follows. The RuvA-RuvB-RuvC complex processes Holliday junction (HJ) DNA during genetic recombination and DNA repair, while the RuvA-RuvB complex plays an important role in the rescue of blocked DNA replication forks via replication fork reversal (RFR). RuvA specifically binds to HJ cruciform DNA, conferring on it an open structure. The RuvB hexamer acts as an ATP-dependent pump, pulling dsDNA into and through the RuvAB complex. RuvB forms 2 homohexamers on either side of HJ DNA bound by 1 or 2 RuvA tetramers; 4 subunits per hexamer contact DNA at a time. Coordinated motions by a converter formed by DNA-disengaged RuvB subunits stimulates ATP hydrolysis and nucleotide exchange. Immobilization of the converter enables RuvB to convert the ATP-contained energy into a lever motion, pulling 2 nucleotides of DNA out of the RuvA tetramer per ATP hydrolyzed, thus driving DNA branch migration. The RuvB motors rotate together with the DNA substrate, which together with the progressing nucleotide cycle form the mechanistic basis for DNA recombination by continuous HJ branch migration. Branch migration allows RuvC to scan DNA until it finds its consensus sequence, where it cleaves and resolves cruciform DNA. In Synechococcus sp. (strain JA-3-3Ab) (Cyanobacteria bacterium Yellowstone A-Prime), this protein is Holliday junction branch migration complex subunit RuvB 2.